Reading from the N-terminus, the 177-residue chain is Cytidylate kinase (177 aa).

8–16 (GPPGGGKTT) contributes to the ATP binding site.

Belongs to the cytidylate kinase family. Type 2 subfamily.

The protein localises to the cytoplasm. It carries out the reaction CMP + ATP = CDP + ADP. The catalysed reaction is dCMP + ATP = dCDP + ADP. This chain is Cytidylate kinase, found in Staphylothermus marinus (strain ATCC 43588 / DSM 3639 / JCM 9404 / F1).